The sequence spans 516 residues: Radial spoke head protein 3 homolog A (516 aa).

3 disordered regions span residues 1–45 (MAAT…GNPA), 120–139 (STLN…AEAS), and 190–233 (PTGQ…PVEG). Residues 12 to 25 (AKKRPLHQRARRPA) are compositionally biased toward basic residues. Residues 120–129 (STLNQASAMT) show a composition bias toward polar residues. A compositionally biased stretch (basic residues) spans 208 to 217 (QARRRALARK). Positions 218 to 233 (RAQEQLKPRTPEPVEG) are enriched in basic and acidic residues. At T270 the chain carries Phosphothreonine; by MAPK1. A coiled-coil region spans residues 333–369 (YEEIRNVELAEVQRLEEQERRHREEKERRKKQQWEIV). The interval 459–516 (EAMPPGQKTNVINGPNTVTDPSVTTLHTQKPVLDRVSSQPAPSQERKPVEEGGHLMAE) is disordered. Residues 465–486 (QKTNVINGPNTVTDPSVTTLHT) are compositionally biased toward polar residues. Basic and acidic residues predominate over residues 502–516 (QERKPVEEGGHLMAE).

This sequence belongs to the flagellar radial spoke RSP3 family. As to quaternary structure, may be a component of axonemal radial spokes. Interacts with IQUB. Interacts with phosphorylated MAPK1. Interacts with MEK1. Interacts with PKA regulatory subunits PRKAR1A and PRKAR1B. Interacts with RSPH1. Interacts with RSPH4A. Interacts with RSPH6A. Interacts with RSPH9. Interacts with CFAP61. Interacts with LRRC23.

It localises to the cytoplasm. The protein resides in the cytoskeleton. It is found in the cilium axoneme. The protein localises to the flagellum axoneme. In terms of biological role, may function as part of axonemal radial spoke complexes that play an important part in the motility of sperm and cilia. Functions as a protein kinase A-anchoring protein that scaffolds the cAMP-dependent protein kinase holoenzyme. May serve as a point of convergence for MAPK and PKA signaling in cilia. This Mus musculus (Mouse) protein is Radial spoke head protein 3 homolog A (Rsph3a).